A 195-amino-acid chain; its full sequence is Holliday junction branch migration complex subunit RuvA (195 aa).

Positions 1–63 are domain I; sequence MIASVRGEVL…EDSQTLYGFA (63 aa). Residues 64–138 form a domain II region; sequence DSDARDLFLT…DKVGSSTSSG (75 aa). The tract at residues 138–142 is flexible linker; that stretch reads GVAAA. Positions 143–195 are domain III; that stretch reads GGHGIRGPVVEALVGLGFAVKQAEEATDKVLANDPEATTSSALRAALSMLGKK.

Belongs to the RuvA family. In terms of assembly, homotetramer. Forms an RuvA(8)-RuvB(12)-Holliday junction (HJ) complex. HJ DNA is sandwiched between 2 RuvA tetramers; dsDNA enters through RuvA and exits via RuvB. An RuvB hexamer assembles on each DNA strand where it exits the tetramer. Each RuvB hexamer is contacted by two RuvA subunits (via domain III) on 2 adjacent RuvB subunits; this complex drives branch migration. In the full resolvosome a probable DNA-RuvA(4)-RuvB(12)-RuvC(2) complex forms which resolves the HJ.

Its subcellular location is the cytoplasm. Its function is as follows. The RuvA-RuvB-RuvC complex processes Holliday junction (HJ) DNA during genetic recombination and DNA repair, while the RuvA-RuvB complex plays an important role in the rescue of blocked DNA replication forks via replication fork reversal (RFR). RuvA specifically binds to HJ cruciform DNA, conferring on it an open structure. The RuvB hexamer acts as an ATP-dependent pump, pulling dsDNA into and through the RuvAB complex. HJ branch migration allows RuvC to scan DNA until it finds its consensus sequence, where it cleaves and resolves the cruciform DNA. This is Holliday junction branch migration complex subunit RuvA from Mycolicibacterium gilvum (strain PYR-GCK) (Mycobacterium gilvum (strain PYR-GCK)).